The sequence spans 484 residues: Glutamate--tRNA ligase (484 aa).

The short motif at P11–N21 is the 'HIGH' region element. Positions K252–R256 match the 'KMSKS' region motif. K255 provides a ligand contact to ATP.

It belongs to the class-I aminoacyl-tRNA synthetase family. Glutamate--tRNA ligase type 1 subfamily. In terms of assembly, monomer.

The protein localises to the cytoplasm. The enzyme catalyses tRNA(Glu) + L-glutamate + ATP = L-glutamyl-tRNA(Glu) + AMP + diphosphate. In terms of biological role, catalyzes the attachment of glutamate to tRNA(Glu) in a two-step reaction: glutamate is first activated by ATP to form Glu-AMP and then transferred to the acceptor end of tRNA(Glu). This is Glutamate--tRNA ligase from Staphylococcus saprophyticus subsp. saprophyticus (strain ATCC 15305 / DSM 20229 / NCIMB 8711 / NCTC 7292 / S-41).